The sequence spans 275 residues: 4-hydroxy-3-methylbut-2-enyl diphosphate reductase (275 aa).

A [4Fe-4S] cluster-binding site is contributed by Cys12. (2E)-4-hydroxy-3-methylbut-2-enyl diphosphate contacts are provided by His40 and His70. His40 and His70 together coordinate dimethylallyl diphosphate. 2 residues coordinate isopentenyl diphosphate: His40 and His70. Cys92 serves as a coordination point for [4Fe-4S] cluster. His119 serves as a coordination point for (2E)-4-hydroxy-3-methylbut-2-enyl diphosphate. His119 is a binding site for dimethylallyl diphosphate. Residue His119 coordinates isopentenyl diphosphate. Residue Glu121 is the Proton donor of the active site. Thr151 lines the (2E)-4-hydroxy-3-methylbut-2-enyl diphosphate pocket. Cys181 is a [4Fe-4S] cluster binding site. (2E)-4-hydroxy-3-methylbut-2-enyl diphosphate-binding residues include Ser209, Ser210, Asn211, and Ser251. Dimethylallyl diphosphate is bound by residues Ser209, Ser210, Asn211, and Ser251. The isopentenyl diphosphate site is built by Ser209, Ser210, Asn211, and Ser251.

This sequence belongs to the IspH family. Requires [4Fe-4S] cluster as cofactor.

It catalyses the reaction isopentenyl diphosphate + 2 oxidized [2Fe-2S]-[ferredoxin] + H2O = (2E)-4-hydroxy-3-methylbut-2-enyl diphosphate + 2 reduced [2Fe-2S]-[ferredoxin] + 2 H(+). The enzyme catalyses dimethylallyl diphosphate + 2 oxidized [2Fe-2S]-[ferredoxin] + H2O = (2E)-4-hydroxy-3-methylbut-2-enyl diphosphate + 2 reduced [2Fe-2S]-[ferredoxin] + 2 H(+). It functions in the pathway isoprenoid biosynthesis; dimethylallyl diphosphate biosynthesis; dimethylallyl diphosphate from (2E)-4-hydroxy-3-methylbutenyl diphosphate: step 1/1. It participates in isoprenoid biosynthesis; isopentenyl diphosphate biosynthesis via DXP pathway; isopentenyl diphosphate from 1-deoxy-D-xylulose 5-phosphate: step 6/6. Catalyzes the conversion of 1-hydroxy-2-methyl-2-(E)-butenyl 4-diphosphate (HMBPP) into a mixture of isopentenyl diphosphate (IPP) and dimethylallyl diphosphate (DMAPP). Acts in the terminal step of the DOXP/MEP pathway for isoprenoid precursor biosynthesis. In Thermotoga sp. (strain RQ2), this protein is 4-hydroxy-3-methylbut-2-enyl diphosphate reductase.